The primary structure comprises 134 residues: Fluoride-specific ion channel FluC (134 aa).

Transmembrane regions (helical) follow at residues 7–27, 38–58, 69–89, and 110–130; these read LAVAIGGSLGAMSRYLVTIMA, GTLLVNTLGSFLAGFFLIVLV, LFLFTGFLGAFTTFSSFAAES, and VGSLSMVFIGTLVAKYVLLGH. 2 residues coordinate Na(+): G77 and T80.

It belongs to the fluoride channel Fluc/FEX (TC 1.A.43) family.

The protein resides in the cell inner membrane. The catalysed reaction is fluoride(in) = fluoride(out). Na(+) is not transported, but it plays an essential structural role and its presence is essential for fluoride channel function. Its function is as follows. Fluoride-specific ion channel. Important for reducing fluoride concentration in the cell, thus reducing its toxicity. This is Fluoride-specific ion channel FluC from Legionella pneumophila subsp. pneumophila (strain Philadelphia 1 / ATCC 33152 / DSM 7513).